Consider the following 175-residue polypeptide: Sec-independent protein translocase protein TatB (175 aa).

Residues 1–21 (MFDIGWSELVLIGVVALIAIG) form a helical membrane-spanning segment. Disordered stretches follow at residues 100–132 (KPAE…PTPE) and 155–175 (QAPV…AKAS). The segment covering 111–132 (EAPATSSEALTTPTTPEAPTPE) has biased composition (low complexity).

This sequence belongs to the TatB family. In terms of assembly, the Tat system comprises two distinct complexes: a TatABC complex, containing multiple copies of TatA, TatB and TatC subunits, and a separate TatA complex, containing only TatA subunits. Substrates initially bind to the TatABC complex, which probably triggers association of the separate TatA complex to form the active translocon.

The protein localises to the cell inner membrane. Part of the twin-arginine translocation (Tat) system that transports large folded proteins containing a characteristic twin-arginine motif in their signal peptide across membranes. Together with TatC, TatB is part of a receptor directly interacting with Tat signal peptides. TatB may form an oligomeric binding site that transiently accommodates folded Tat precursor proteins before their translocation. This Bradyrhizobium diazoefficiens (strain JCM 10833 / BCRC 13528 / IAM 13628 / NBRC 14792 / USDA 110) protein is Sec-independent protein translocase protein TatB.